The primary structure comprises 108 residues: MYSCITFFQRLERSILSGNKTATIRDKSDSHYLVGQMLDACTHEDNRKMCQIEILSIEYVTFSELNRAHANAEGLPFLFMLKWIVRKIYPTSNDLFFISFRVVTIDIL.

An ASCH domain is found at 5 to 102 (ITFFQRLERS…NDLFFISFRV (98 aa)). The active-site Proton acceptor is the K20. Residue T23 is the Nucleophile of the active site. E73 serves as the catalytic Proton donor.

Belongs to the N(4)-acetylcytidine amidohydrolase family.

It carries out the reaction N(4)-acetylcytidine + H2O = cytidine + acetate + H(+). The enzyme catalyses N(4)-acetyl-2'-deoxycytidine + H2O = 2'-deoxycytidine + acetate + H(+). The catalysed reaction is N(4)-acetylcytosine + H2O = cytosine + acetate + H(+). In terms of biological role, catalyzes the hydrolysis of N(4)-acetylcytidine (ac4C). The chain is N(4)-acetylcytidine amidohydrolase from Moritella marina (Vibrio marinus).